Here is a 2470-residue protein sequence, read N- to C-terminus: Serine/threonine-protein kinase mTor (2470 aa).

8 HEAT repeats span residues 172-209 (QHIL…VTAQ), 746-785 (SYMN…VNGG), 791-829 (LWAD…ATGR), 835-873 (HKYP…MDPY), 962-999 (PYLA…FVKL), 1043-1080 (DYLA…FGST), 1083-1122 (YYLP…QLDF), and 1124-1160 (DFSS…QLGK). The region spanning 1349 to 1903 (LLGTRAMACR…VYPLTVASKS (555 aa)) is the FAT domain. TPR repeat units follow at residues 1407-1440 (ANEL…DSSD) and 1718-1751 (MATW…DPNW). Residues 1854–1891 (NTWLQVIPQLIARIDTHRQLVGQLIHQLLMDIGKNHPQ) form an HEAT 9 repeat. Residues 2077–2389 (IKTNLQVITS…SLSNSVEDSL (313 aa)) enclose the PI3K/PI4K catalytic domain. Positions 2083-2089 (VITSKQR) are G-loop. Residues 2256-2264 (GLGDRHPSN) are catalytic loop. The tract at residues 2276 to 2301 (HIDFGDCFEVAMTREKFPEKIPFRLT) is activation loop. Residues 2364-2389 (AGAGAPGGRGGSGMQDSLSNSVEDSL) form a disordered region. Gly residues predominate over residues 2367–2376 (GAPGGRGGSG). The segment covering 2377–2386 (MQDSLSNSVE) has biased composition (polar residues). Positions 2438–2470 (KSVNEQSQVELLIQQATNNENLCQCYIGWCPFW) constitute an FATC domain.

Belongs to the PI3/PI4-kinase family. As to quaternary structure, may be part of a minimal complex, TORC1, consisting of mTor, raptor and lst8. May be part of a minimal complex, TORC2, consisting of mTor, rictor and lst8. Self-associates; assembles into homomultimeric complexes. Component of a multiprotein complex.

It catalyses the reaction L-seryl-[protein] + ATP = O-phospho-L-seryl-[protein] + ADP + H(+). The catalysed reaction is L-threonyl-[protein] + ATP = O-phospho-L-threonyl-[protein] + ADP + H(+). Its function is as follows. Promotes cell and tissue growth, maintains tissue homeostatis and controls responses to environmental stress and aging. Regulates growth during animal development by coupling growth factor signaling to nutrient availability. Central regulators of autophagy. May be involved in atg1 phosphorylation. May also be involved, directly or indirectly, in the control of neuronal function. Phosphorylates S6K/p70S6K, in vitro. May regulate the activity of S6K. Overexpression inhibits growth and reduces cell size. Affects the timing of neuronal cell differentiation. Hyperactivation of the signaling leads to accelerated differentiation, whereas inhibition of the signaling retards differentiation. Thus, in addition to controlling growth of the cell in which it resides, it can also influence growth of distant cells and organs during development via a humoral mechanism. As part of the TORC1 complex regulates energy homeostasis and promotes certain aspects of larval growth by negatively regulating REPTOR. REPTOR functions downstream of TORC1 to regulate the expression of stress response genes in response to TORC1 inhibition resulting from nutrient deprivation. When TORC1 activity is high it phosphorylates REPTOR which inhibits its recruitment into the nucleus and antagonizes their function. This function is essential under normal feeding conditions to promote TORC1-dependent growth during larval development and, in adults and larvae to prevent the REPTOR-dependent expression of nutrient stress response genes. In short, during development, it primarily controls growth, whereas in the adult, where there is relatively little growth, it controls aging and other aspects of nutrient-related physiology. Rag GTPases act as activators of TORC1 in response to amino acid signals. In Drosophila melanogaster (Fruit fly), this protein is Serine/threonine-protein kinase mTor.